The chain runs to 145 residues: D-aminoacyl-tRNA deacylase (145 aa).

The short motif at 137–138 is the Gly-cisPro motif, important for rejection of L-amino acids element; that stretch reads GP.

Belongs to the DTD family. Homodimer.

Its subcellular location is the cytoplasm. The enzyme catalyses glycyl-tRNA(Ala) + H2O = tRNA(Ala) + glycine + H(+). It catalyses the reaction a D-aminoacyl-tRNA + H2O = a tRNA + a D-alpha-amino acid + H(+). Functionally, an aminoacyl-tRNA editing enzyme that deacylates mischarged D-aminoacyl-tRNAs. Also deacylates mischarged glycyl-tRNA(Ala), protecting cells against glycine mischarging by AlaRS. Acts via tRNA-based rather than protein-based catalysis; rejects L-amino acids rather than detecting D-amino acids in the active site. By recycling D-aminoacyl-tRNA to D-amino acids and free tRNA molecules, this enzyme counteracts the toxicity associated with the formation of D-aminoacyl-tRNA entities in vivo and helps enforce protein L-homochirality. This is D-aminoacyl-tRNA deacylase from Serratia proteamaculans (strain 568).